The sequence spans 143 residues: Small ribosomal subunit protein uS9 (143 aa).

The disordered stretch occupies residues 118 to 143; it reads DSRRTEPHKPNRSTKGPRAKRQKSYR. A compositionally biased stretch (basic residues) spans 127–143; sequence PNRSTKGPRAKRQKSYR.

The protein belongs to the universal ribosomal protein uS9 family.

This Thermococcus sibiricus (strain DSM 12597 / MM 739) protein is Small ribosomal subunit protein uS9.